The primary structure comprises 509 residues: Methionine--tRNA ligase (509 aa).

Positions 12 to 22 (YYPSGDLHLGH) match the 'HIGH' region motif. Residues 302–306 (KMSKS) carry the 'KMSKS' region motif. K305 contacts ATP.

Belongs to the class-I aminoacyl-tRNA synthetase family. MetG type 2B subfamily. Monomer.

It is found in the cytoplasm. The enzyme catalyses tRNA(Met) + L-methionine + ATP = L-methionyl-tRNA(Met) + AMP + diphosphate. Its function is as follows. Is required not only for elongation of protein synthesis but also for the initiation of all mRNA translation through initiator tRNA(fMet) aminoacylation. This is Methionine--tRNA ligase (metG) from Mycoplasmopsis pulmonis (strain UAB CTIP) (Mycoplasma pulmonis).